A 125-amino-acid polypeptide reads, in one-letter code: Dirigent protein 22 (125 aa).

N-linked (GlcNAc...) asparagine glycans are attached at residues Asn8, Asn30, and Asn65.

Belongs to the plant dirigent protein family. Homodimer.

It localises to the secreted. The protein resides in the extracellular space. Its subcellular location is the apoplast. In terms of biological role, dirigent proteins impart stereoselectivity on the phenoxy radical-coupling reaction, yielding optically active lignans from two molecules of coniferyl alcohol in the biosynthesis of lignans, flavonolignans, and alkaloids and thus plays a central role in plant secondary metabolism. This is Dirigent protein 22 (DIR22) from Arabidopsis thaliana (Mouse-ear cress).